A 165-amino-acid polypeptide reads, in one-letter code: 3-isopropylmalate dehydratase small subunit (165 aa).

Belongs to the LeuD family. LeuD type 2 subfamily. Heterodimer of LeuC and LeuD.

It catalyses the reaction (2R,3S)-3-isopropylmalate = (2S)-2-isopropylmalate. Its pathway is amino-acid biosynthesis; L-leucine biosynthesis; L-leucine from 3-methyl-2-oxobutanoate: step 2/4. Catalyzes the isomerization between 2-isopropylmalate and 3-isopropylmalate, via the formation of 2-isopropylmaleate. The chain is 3-isopropylmalate dehydratase small subunit from Saccharolobus islandicus (strain Y.N.15.51 / Yellowstone #2) (Sulfolobus islandicus).